A 314-amino-acid chain; its full sequence is Pathogenicity locus probable regulatory protein HrpR (314 aa).

One can recognise a Sigma-54 factor interaction domain in the interval 11–239 (TRWNVTALSA…LKSAANAICP (229 aa)). ATP is bound by residues 39-46 (GETGTGKD) and 101-110 (SNGGTLYLDE). Residues 281 to 300 (FDAVLEELELPRRTLYHRMK) constitute a DNA-binding region (H-T-H motif).

Its function is as follows. Member of the two-component regulatory system HrpR/HrpS that regulates the activation of the sigma factor hrpL which itself induces the expression of hprD as well as other hrp loci which are involved in plant pathogenicity, hrmA and avr genes. Probably interacts with sigma-54. The chain is Pathogenicity locus probable regulatory protein HrpR (hrpR) from Pseudomonas syringae pv. syringae.